The sequence spans 971 residues: Oncostatin-M-specific receptor subunit beta (971 aa).

The first 23 residues, 1–23, serve as a signal peptide directing secretion; the sequence is MAFSVVLHPAFLLAVLSLRASRS. The Extracellular portion of the chain corresponds to 24–737; it reads EVLEEPLPLT…VTTPDARSHM (714 aa). N-linked (GlcNAc...) asparagine glycans are attached at residues Asn-74, Asn-97, Asn-130, Asn-162, and Asn-239. A disulfide bond links Cys-242 and Cys-252. N-linked (GlcNAc...) asparagine glycosylation is found at Asn-271, Asn-304, Asn-323, and Asn-377. 4 consecutive Fibronectin type-III domains span residues 332-425, 427-523, 524-620, and 622-733; these read APQD…TPET, PSQA…SNDS, GHEE…TQEL, and PLVN…TPDA. A WSXWS motif motif is present at residues 412–416; that stretch reads WSDWT. N-linked (GlcNAc...) asparagine glycans are attached at residues Asn-491, Asn-541, Asn-577, Asn-689, and Asn-722. Residues 738–758 traverse the membrane as a helical segment; that stretch reads LLQIILPMTLCVLLSIIVCYW. Over 759 to 971 the chain is Cytoplasmic; sequence KSQWVKEKCY…STVLLGQGEQ (213 aa). The short motif at 767–775 is the Box 1 motif element; the sequence is CYPDIPNPY. A disordered region spans residues 949–971; it reads LASPSLKEDNSLTSTVLLGQGEQ. The span at 959-971 shows a compositional bias: polar residues; that stretch reads SLTSTVLLGQGEQ.

This sequence belongs to the type I cytokine receptor family. Type 2 subfamily. Heterodimer composed of OSMR and IL6ST (type II OSM receptor). Heterodimer with IL31RA to form the IL31 receptor. As to expression, widely expressed. Expressed at highest levels in the lung, heart, thymus and spleen. Expressed in dorsal root ganglia.

The protein localises to the membrane. In terms of biological role, associates with IL31RA to form the IL31 receptor. Binds IL31 to activate STAT3 and possibly STAT1 and STAT5. Capable of transducing OSM-specific signaling events. The polypeptide is Oncostatin-M-specific receptor subunit beta (Osmr) (Mus musculus (Mouse)).